The following is a 284-amino-acid chain: Acetylglutamate kinase (284 aa).

Substrate is bound by residues Gly-64 to Gly-65, Arg-86, and Asn-177.

The protein belongs to the acetylglutamate kinase family. ArgB subfamily.

Its subcellular location is the cytoplasm. It catalyses the reaction N-acetyl-L-glutamate + ATP = N-acetyl-L-glutamyl 5-phosphate + ADP. It participates in amino-acid biosynthesis; L-arginine biosynthesis; N(2)-acetyl-L-ornithine from L-glutamate: step 2/4. Catalyzes the ATP-dependent phosphorylation of N-acetyl-L-glutamate. This Haemophilus ducreyi (strain 35000HP / ATCC 700724) protein is Acetylglutamate kinase.